The following is a 436-amino-acid chain: DNA primase DnaG (436 aa).

Positions 169–243 (DSIIVVEGRA…DIDYVARAPY (75 aa)) constitute a Toprim domain. Glutamate 175, aspartate 217, and aspartate 219 together coordinate Mg(2+).

It belongs to the archaeal DnaG primase family. In terms of assembly, forms a ternary complex with MCM helicase and DNA. The cofactor is Mg(2+).

The catalysed reaction is ssDNA + n NTP = ssDNA/pppN(pN)n-1 hybrid + (n-1) diphosphate.. In terms of biological role, RNA polymerase that catalyzes the synthesis of short RNA molecules used as primers for DNA polymerase during DNA replication. The polypeptide is DNA primase DnaG (Methanococcus maripaludis (strain DSM 14266 / JCM 13030 / NBRC 101832 / S2 / LL)).